A 506-amino-acid polypeptide reads, in one-letter code: Tabersonine 6,7-epoxidase isoform 1 (506 aa).

The chain crosses the membrane as a helical span at residues 1–21 (MEFVVSLFAFVVSCFILLKVA). N-linked (GlcNAc...) asparagine glycans are attached at residues Asn173 and Asn261. Residue Cys441 participates in heme binding.

It belongs to the cytochrome P450 family. Heme is required as a cofactor. As to expression, mainly expressed in roots.

Its subcellular location is the endoplasmic reticulum membrane. It carries out the reaction (-)-tabersonine + reduced [NADPH--hemoprotein reductase] + O2 = lochnericine + oxidized [NADPH--hemoprotein reductase] + H2O + H(+). It functions in the pathway alkaloid biosynthesis. Component of the monoterpenoid indole alkaloids (MIAs, e.g. echitovenine, tabersonine, lochnericine, 19-hydroxytabersonine and horhammericine) biosynthetic pathway; MIAs are used in cancer treatment and other medical applications. Cytochrome P450 catalyzing the conversion of tabersonine to lochnericine. This is Tabersonine 6,7-epoxidase isoform 1 from Catharanthus roseus (Madagascar periwinkle).